The primary structure comprises 252 residues: Glycerol-3-phosphate acyltransferase (252 aa).

Helical transmembrane passes span 6–26, 66–86, 104–124, 140–160, 164–184, and 204–224; these read SVAM…YLIG, ILTL…TYII, AILV…PIFF, ITID…ILLI, MSLS…IPGI, and VIKG…ILIY.

Belongs to the PlsY family. Probably interacts with PlsX.

It is found in the cell membrane. It carries out the reaction an acyl phosphate + sn-glycerol 3-phosphate = a 1-acyl-sn-glycero-3-phosphate + phosphate. It functions in the pathway lipid metabolism; phospholipid metabolism. Catalyzes the transfer of an acyl group from acyl-phosphate (acyl-PO(4)) to glycerol-3-phosphate (G3P) to form lysophosphatidic acid (LPA). This enzyme utilizes acyl-phosphate as fatty acyl donor, but not acyl-CoA or acyl-ACP. The chain is Glycerol-3-phosphate acyltransferase from Ureaplasma urealyticum serovar 10 (strain ATCC 33699 / Western).